The chain runs to 576 residues: Arginine--tRNA ligase (576 aa).

The 'HIGH' region signature appears at 126–136 (ANPTGPMHIGH).

It belongs to the class-I aminoacyl-tRNA synthetase family. As to quaternary structure, monomer.

Its subcellular location is the cytoplasm. It catalyses the reaction tRNA(Arg) + L-arginine + ATP = L-arginyl-tRNA(Arg) + AMP + diphosphate. In Rickettsia africae (strain ESF-5), this protein is Arginine--tRNA ligase.